We begin with the raw amino-acid sequence, 132 residues long: Riboflavin kinase (132 aa).

10–15 is a binding site for CDP; it reads GLGEGR. Positions 39 and 41 each coordinate Mg(2+). FMN is bound by residues threonine 95, tyrosine 96, and glutamate 103. Residue 108-111 coordinates CDP; it reads MKLR.

Monomer. Mg(2+) serves as cofactor.

It catalyses the reaction riboflavin + CTP = CDP + FMN + H(+). It participates in cofactor biosynthesis; FMN biosynthesis; FMN from riboflavin (CTP route): step 1/1. Its function is as follows. Catalyzes the CTP-dependent phosphorylation of riboflavin (vitamin B2) to form flavin mononucleotide (FMN). Can also utilize UTP as the phosphate donor, although less efficiently, and it is unclear if ATP and GTP can also serve as substrates or not. The chain is Riboflavin kinase (ribK) from Methanocaldococcus jannaschii (strain ATCC 43067 / DSM 2661 / JAL-1 / JCM 10045 / NBRC 100440) (Methanococcus jannaschii).